We begin with the raw amino-acid sequence, 292 residues long: Acetylglutamate kinase (292 aa).

Substrate-binding positions include 72–73 (GG), Arg94, and Asn187.

This sequence belongs to the acetylglutamate kinase family. ArgB subfamily.

Its subcellular location is the cytoplasm. The enzyme catalyses N-acetyl-L-glutamate + ATP = N-acetyl-L-glutamyl 5-phosphate + ADP. The protein operates within amino-acid biosynthesis; L-arginine biosynthesis; N(2)-acetyl-L-ornithine from L-glutamate: step 2/4. Functionally, catalyzes the ATP-dependent phosphorylation of N-acetyl-L-glutamate. This is Acetylglutamate kinase from Trichodesmium erythraeum (strain IMS101).